The following is a 1221-amino-acid chain: DNA-directed RNA polymerase subunit beta' (1221 aa).

Cysteine 60, cysteine 62, cysteine 75, and cysteine 78 together coordinate Zn(2+). Mg(2+)-binding residues include aspartate 449, aspartate 451, and aspartate 453. Zn(2+) contacts are provided by cysteine 821, cysteine 896, cysteine 903, and cysteine 906.

It belongs to the RNA polymerase beta' chain family. As to quaternary structure, the RNAP catalytic core consists of 2 alpha, 1 beta, 1 beta' and 1 omega subunit. When a sigma factor is associated with the core the holoenzyme is formed, which can initiate transcription. It depends on Mg(2+) as a cofactor. Zn(2+) serves as cofactor.

The catalysed reaction is RNA(n) + a ribonucleoside 5'-triphosphate = RNA(n+1) + diphosphate. Its function is as follows. DNA-dependent RNA polymerase catalyzes the transcription of DNA into RNA using the four ribonucleoside triphosphates as substrates. The polypeptide is DNA-directed RNA polymerase subunit beta' (Lactobacillus delbrueckii subsp. bulgaricus (strain ATCC 11842 / DSM 20081 / BCRC 10696 / JCM 1002 / NBRC 13953 / NCIMB 11778 / NCTC 12712 / WDCM 00102 / Lb 14)).